A 360-amino-acid chain; its full sequence is DNA replication and repair protein RecF (360 aa).

Residue 30–37 (GNNGSGKT) coordinates ATP.

Belongs to the RecF family.

It is found in the cytoplasm. The RecF protein is involved in DNA metabolism; it is required for DNA replication and normal SOS inducibility. RecF binds preferentially to single-stranded, linear DNA. It also seems to bind ATP. This is DNA replication and repair protein RecF from Mannheimia succiniciproducens (strain KCTC 0769BP / MBEL55E).